We begin with the raw amino-acid sequence, 865 residues long: Xylosyltransferase 2 (865 aa).

The Cytoplasmic segment spans residues 1–15; that stretch reads MVASARVQKLVRRYK. A helical; Signal-anchor for type II membrane protein membrane pass occupies residues 16-36; sequence LAIATALAILLLQGLVVWSFS. The Lumenal portion of the chain corresponds to 37–865; the sequence is GLEEDEPGEK…GPVKADGRLR (829 aa). The disordered stretch occupies residues 39–155; that stretch reads EEDEPGEKGR…SVEGAPQPTD (117 aa). The segment covering 53-65 has biased composition (basic and acidic residues); that stretch reads RPLDPGEGSKDTD. Positions 73–82 are enriched in basic residues; that stretch reads SAGRRHGRWR. An N-linked (GlcNAc...) asparagine glycan is attached at asparagine 122. Disulfide bonds link cysteine 162/cysteine 190, cysteine 206/cysteine 448, cysteine 467/cysteine 480, and cysteine 469/cysteine 478. Residues valine 239, aspartate 267, and 296-298 contribute to the UDP-alpha-D-xylose site; that span reads TIW. N-linked (GlcNAc...) asparagine glycosylation is present at asparagine 327. 400–401 serves as a coordination point for UDP-alpha-D-xylose; that stretch reads DW. Residues serine 481 and 504–505 contribute to the UDP-alpha-D-xylose site; that span reads RK. 2 disulfide bridges follow: cysteine 581/cysteine 833 and cysteine 826/cysteine 839. N-linked (GlcNAc...) asparagine glycosylation is present at asparagine 683.

It belongs to the glycosyltransferase 14 family. XylT subfamily. As to quaternary structure, monomer. Requires Mg(2+) as cofactor. Mn(2+) serves as cofactor. Contains disulfide bonds. Detected in brain, liver, lung, kidney, heart, spleen and testis, and at lower levels in skeletal muscle.

The protein localises to the golgi apparatus membrane. It localises to the secreted. It carries out the reaction UDP-alpha-D-xylose + L-seryl-[protein] = 3-O-(beta-D-xylosyl)-L-seryl-[protein] + UDP + H(+). It participates in glycan metabolism; chondroitin sulfate biosynthesis. It functions in the pathway glycan metabolism; heparan sulfate biosynthesis. Functionally, catalyzes the first step in the biosynthesis of chondroitin sulfate, heparan sulfate and dermatan sulfate proteoglycans, such as DCN. Transfers D-xylose from UDP-D-xylose to specific serine residues of the core protein. The protein is Xylosyltransferase 2 (Xylt2) of Mus musculus (Mouse).